The sequence spans 290 residues: Cell division protein ZipA (290 aa).

Residue Met1 is a topological domain, periplasmic. A helical membrane pass occupies residues 2-22; that stretch reads DIGLREWLIVIGLIVIAGILF. Residues 23 to 290 are Cytoplasmic-facing; it reads DGWRRMRGGK…HERRSLMQKR (268 aa). The segment at 66–143 is disordered; sequence REPSFDEQDL…REKAPSVAAA (78 aa). Over residues 81–99 the composition is skewed to basic and acidic residues; that stretch reads REGKERKGGKRQDEPRQGD. Positions 100–114 are enriched in acidic residues; the sequence is LDLDEGMALEADPSD.

It belongs to the ZipA family. Interacts with FtsZ via their C-terminal domains.

It is found in the cell inner membrane. In terms of biological role, essential cell division protein that stabilizes the FtsZ protofilaments by cross-linking them and that serves as a cytoplasmic membrane anchor for the Z ring. Also required for the recruitment to the septal ring of downstream cell division proteins. This Pseudomonas paraeruginosa (strain DSM 24068 / PA7) (Pseudomonas aeruginosa (strain PA7)) protein is Cell division protein ZipA.